The following is a 413-amino-acid chain: Ribosomal RNA large subunit methyltransferase G (413 aa).

Residues 389–413 (EAEVEQAFDTETPHPQSALYGKPKA) are disordered.

It belongs to the methyltransferase superfamily. RlmG family.

It localises to the cytoplasm. It catalyses the reaction guanosine(1835) in 23S rRNA + S-adenosyl-L-methionine = N(2)-methylguanosine(1835) in 23S rRNA + S-adenosyl-L-homocysteine + H(+). Functionally, specifically methylates the guanine in position 1835 (m2G1835) of 23S rRNA. The polypeptide is Ribosomal RNA large subunit methyltransferase G (Shewanella pealeana (strain ATCC 700345 / ANG-SQ1)).